The following is a 33-amino-acid chain: MLFTLGWASLAAMFSFSIAMVVWGRNGDGTLNF.

Residues Leu-2–Val-22 form a helical membrane-spanning segment.

Belongs to the PetN family. In terms of assembly, the 4 large subunits of the cytochrome b6-f complex are cytochrome b6, subunit IV (17 kDa polypeptide, PetD), cytochrome f and the Rieske protein, while the 4 small subunits are PetG, PetL, PetM and PetN. The complex functions as a dimer.

It is found in the cellular thylakoid membrane. Functionally, component of the cytochrome b6-f complex, which mediates electron transfer between photosystem II (PSII) and photosystem I (PSI), cyclic electron flow around PSI, and state transitions. This is Cytochrome b6-f complex subunit 8 from Synechococcus sp. (strain CC9605).